Reading from the N-terminus, the 127-residue chain is Photosystem II extrinsic protein U (127 aa).

Residues 1–31 (MSRLFRRLSTLLLCSLLVLGVWLTQPLSVQA) form the signal peptide.

Belongs to the PsbU family. As to quaternary structure, PSII is composed of 1 copy each of membrane proteins PsbA, PsbB, PsbC, PsbD, PsbE, PsbF, PsbH, PsbI, PsbJ, PsbK, PsbL, PsbM, PsbT, PsbX, PsbY, PsbZ, Psb30/Ycf12, peripheral proteins PsbO, CyanoQ (PsbQ), PsbU, PsbV and a large number of cofactors. It forms dimeric complexes.

The protein resides in the cellular thylakoid membrane. In terms of biological role, one of the extrinsic, lumenal subunits of photosystem II (PSII). PSII is a light-driven water plastoquinone oxidoreductase, using light energy to abstract electrons from H(2)O, generating a proton gradient subsequently used for ATP formation. The extrinsic proteins stabilize the structure of photosystem II oxygen-evolving complex (OEC), the ion environment of oxygen evolution and protect the OEC against heat-induced inactivation. The sequence is that of Photosystem II extrinsic protein U from Synechococcus sp. (strain RCC307).